Here is an 850-residue protein sequence, read N- to C-terminus: Protein translocase subunit SecA 2 (850 aa).

Residues Gln83, 101–105 (GEGKT), and Asp491 each bind ATP.

The protein belongs to the SecA family. As to quaternary structure, monomer and homodimer. Part of the essential Sec protein translocation apparatus which comprises SecA, SecYEG and auxiliary proteins SecDF. Other proteins may also be involved.

It localises to the cell membrane. It is found in the cytoplasm. The enzyme catalyses ATP + H2O + cellular proteinSide 1 = ADP + phosphate + cellular proteinSide 2.. Functionally, part of the Sec protein translocase complex. Interacts with the SecYEG preprotein conducting channel. Has a central role in coupling the hydrolysis of ATP to the transfer of proteins into and across the cell membrane, serving as an ATP-driven molecular motor driving the stepwise translocation of polypeptide chains across the membrane. The polypeptide is Protein translocase subunit SecA 2 (Mycolicibacterium vanbaalenii (strain DSM 7251 / JCM 13017 / BCRC 16820 / KCTC 9966 / NRRL B-24157 / PYR-1) (Mycobacterium vanbaalenii)).